Reading from the N-terminus, the 412-residue chain is Serine hydroxymethyltransferase (412 aa).

(6S)-5,6,7,8-tetrahydrofolate is bound by residues Leu112 and 116-118 (GHL). Position 221 is an N6-(pyridoxal phosphate)lysine (Lys221). Glu237 provides a ligand contact to (6S)-5,6,7,8-tetrahydrofolate.

The protein belongs to the SHMT family. In terms of assembly, homodimer. Pyridoxal 5'-phosphate serves as cofactor.

The protein localises to the cytoplasm. It catalyses the reaction (6R)-5,10-methylene-5,6,7,8-tetrahydrofolate + glycine + H2O = (6S)-5,6,7,8-tetrahydrofolate + L-serine. It functions in the pathway one-carbon metabolism; tetrahydrofolate interconversion. Its pathway is amino-acid biosynthesis; glycine biosynthesis; glycine from L-serine: step 1/1. In terms of biological role, catalyzes the reversible interconversion of serine and glycine with tetrahydrofolate (THF) serving as the one-carbon carrier. This reaction serves as the major source of one-carbon groups required for the biosynthesis of purines, thymidylate, methionine, and other important biomolecules. Also exhibits THF-independent aldolase activity toward beta-hydroxyamino acids, producing glycine and aldehydes, via a retro-aldol mechanism. This chain is Serine hydroxymethyltransferase, found in Malacoplasma penetrans (strain HF-2) (Mycoplasma penetrans).